Here is a 208-residue protein sequence, read N- to C-terminus: Small ribosomal subunit protein uS4 (208 aa).

In terms of domain architecture, S4 RNA-binding spans 98 to 161; sequence LRLDNVVFRL…RKVVRISEAL (64 aa).

It belongs to the universal ribosomal protein uS4 family. In terms of assembly, part of the 30S ribosomal subunit. Contacts protein S5. The interaction surface between S4 and S5 is involved in control of translational fidelity.

Its function is as follows. One of the primary rRNA binding proteins, it binds directly to 16S rRNA where it nucleates assembly of the body of the 30S subunit. Functionally, with S5 and S12 plays an important role in translational accuracy. The protein is Small ribosomal subunit protein uS4 of Anaeromyxobacter sp. (strain Fw109-5).